A 712-amino-acid polypeptide reads, in one-letter code: Ribosomal RNA large subunit methyltransferase K/L (712 aa).

A THUMP domain is found at 43-154 (TAYRCCLWTR…GEKGVLGLDM (112 aa)).

The protein belongs to the methyltransferase superfamily. RlmKL family.

It is found in the cytoplasm. It carries out the reaction guanosine(2445) in 23S rRNA + S-adenosyl-L-methionine = N(2)-methylguanosine(2445) in 23S rRNA + S-adenosyl-L-homocysteine + H(+). It catalyses the reaction guanosine(2069) in 23S rRNA + S-adenosyl-L-methionine = N(2)-methylguanosine(2069) in 23S rRNA + S-adenosyl-L-homocysteine + H(+). Its function is as follows. Specifically methylates the guanine in position 2445 (m2G2445) and the guanine in position 2069 (m7G2069) of 23S rRNA. The sequence is that of Ribosomal RNA large subunit methyltransferase K/L from Photobacterium profundum (strain SS9).